The primary structure comprises 757 residues: MDVNPTLLFLKVPAQNAISTTFPYTGDPPYSHGTGTGYTMDTVNRTHQYSEKGKWTTNTETGAPQLNPIDGPLPEDNEPSGYAQTDCVLEAMAFLEESHPGIFENSCLETMEVVQQTRVDRLTQGRQTYDWTLNRNQPAATALANTIEVFRSNGLTANESGRLIDFLKDVMESMDKEEMEITTHFQRKRRVRDNMTKKMVTQRTIGKKKQRVNKRSYLIRALTLNTMTKDAERGKLKRRAIATPGMQIRGFVYFVETLARSICEKLEQSGLPVGGNEKKAKLANVVRKMMTNSQDTELSFTITGDNTKWNENQNPRMFLAMITYITKNQPEWFRNVLSIAPIMFSNKMARLGKGYMFESKSMKLRTQIPAEMLASIDLKYFNESTRKKIEKIRPLLIDGTASLSPGMMMGMFNMLSTVLGVSILNLGQKRYTKTTYWWDGLQSSDDFALIVNAPNHEGIQAGVDRFYRTCKLVGINMSKKKSYINRTGTFEFTSFFYRYGFVANFSMELPSFGVSGINESADMSIGVTVIKNNMINNDLGPATAQMALQLFIKDYRYTYRCHRGDTQIQTRRSFELEKLWEQTRSKAGLLVSDGGPNLYNIRNLHIPEVCLKWELMDEDYQGRLCNPLNPFVSHKEIESVNNAVVMPAHGPAKSMEYDAVATTHSWIPKRNRSILNTSQRGILEDEQMYQKCCNLFEKFFPSSSYRRPVGISSMVEAMVSRARIDARIDFESGRIKKEEFAEIMKICSTIEELRRQK.

Residues 50–82 are disordered; that stretch reads SEKGKWTTNTETGAPQLNPIDGPLPEDNEPSGY. The segment covering 55-64 has biased composition (polar residues); the sequence is WTTNTETGAP. 2 short sequence motifs (nuclear localization signal) span residues 187-195 and 203-216; these read RKRRVRDNM and RTIG…NKRS. Positions 249 to 256 are promoter-binding site; it reads RGFVYFVE. Residues 286–483 form the RdRp catalytic domain; the sequence is VRKMMTNSQD…GINMSKKKSY (198 aa).

The protein belongs to the influenza viruses polymerase PB1 family. Influenza RNA polymerase is composed of three subunits: PB1, PB2 and PA. Interacts (via N-terminus) with PA (via C-terminus). Interacts (via C-terminus) with PB2 (via N-terminus); this interaction is essential for transcription initiation. Phosphorylated by host PRKCA.

It localises to the host nucleus. Its subcellular location is the host cytoplasm. The catalysed reaction is RNA(n) + a ribonucleoside 5'-triphosphate = RNA(n+1) + diphosphate. RNA-dependent RNA polymerase which is responsible for replication and transcription of virus RNA segments. The transcription of viral mRNAs occurs by a unique mechanism called cap-snatching. 5' methylated caps of cellular mRNAs are cleaved after 10-13 nucleotides by PA. In turn, these short capped RNAs are used as primers by PB1 for transcription of viral mRNAs. During virus replication, PB1 initiates RNA synthesis and copy vRNA into complementary RNA (cRNA) which in turn serves as a template for the production of more vRNAs. The chain is RNA-directed RNA polymerase catalytic subunit from Aves (whales).